Here is a 569-residue protein sequence, read N- to C-terminus: Urease subunit alpha (569 aa).

One can recognise a Urease domain in the interval 131-569 (GGMDAHIHYI…LPMAQRYFLF (439 aa)). Positions 136, 138, and 218 each coordinate Ni(2+). Lysine 218 carries the post-translational modification N6-carboxylysine. Histidine 220 contacts substrate. Positions 247 and 273 each coordinate Ni(2+). Residue histidine 321 is the Proton donor of the active site. Aspartate 361 lines the Ni(2+) pocket.

It belongs to the metallo-dependent hydrolases superfamily. Urease alpha subunit family. As to quaternary structure, heterotrimer of UreA (gamma), UreB (beta) and UreC (alpha) subunits. Three heterotrimers associate to form the active enzyme. Ni cation serves as cofactor. Carboxylation allows a single lysine to coordinate two nickel ions.

Its subcellular location is the cytoplasm. It carries out the reaction urea + 2 H2O + H(+) = hydrogencarbonate + 2 NH4(+). It participates in nitrogen metabolism; urea degradation; CO(2) and NH(3) from urea (urease route): step 1/1. The polypeptide is Urease subunit alpha (Agrobacterium fabrum (strain C58 / ATCC 33970) (Agrobacterium tumefaciens (strain C58))).